Reading from the N-terminus, the 178-residue chain is Ribosome maturation factor RimP (178 aa).

Belongs to the RimP family.

It localises to the cytoplasm. Required for maturation of 30S ribosomal subunits. In Streptococcus pyogenes serotype M5 (strain Manfredo), this protein is Ribosome maturation factor RimP.